Here is a 113-residue protein sequence, read N- to C-terminus: Hydrogenase maturation factor HybF (113 aa).

Histidine 2 and glutamate 3 together coordinate Ni(2+). Zn(2+)-binding residues include cysteine 73, cysteine 76, cysteine 89, and cysteine 92.

The protein belongs to the HypA/HybF family. HybF subfamily.

Its function is as follows. Involved in the maturation of [NiFe] hydrogenases. Required for nickel insertion into the metal center of the hydrogenase. The sequence is that of Hydrogenase maturation factor HybF from Escherichia coli O157:H7.